Reading from the N-terminus, the 512-residue chain is Delta(14)-sterol reductase (512 aa).

The next 8 membrane-spanning stretches (helical) occupy residues 27 to 47, 100 to 120, 140 to 160, 172 to 192, 242 to 262, 278 to 298, 324 to 344, and 353 to 373; these read IGASLISFGLPIACYAFGFLC, AVLGVFFWYGLSLLLWVLLPA, ACLSAVTIFVACAAGTIVRGP, YIQLLTVNIIIAYALAIYVYL, SFMELRPGMIGWVLLDLAFAA, WTPLLLGIHVLTIHPVIVIIS, FGFMLSFGDLVWVPFIYSIQA, and ALGPLYVALILTIQATGYYIF. NADP(+) contacts are provided by residues Lys380, Arg384, Leu407, Trp412, and 419–420; that span reads NY. The next 2 membrane-spanning stretches (helical) occupy residues 418-438 and 458-478; these read INYLGDWLMSWSYCLPTLAAG and MKGAGIPITYFYMLYFAILLI. NADP(+) contacts are provided by residues Asp484, 488 to 492, and Tyr499; that span reads CRRKY.

Belongs to the ERG4/ERG24 family.

It localises to the membrane. It catalyses the reaction 4,4-dimethyl-5alpha-cholesta-8,24-dien-3beta-ol + NADP(+) = 4,4-dimethyl-5alpha-cholesta-8,14,24-trien-3beta-ol + NADPH + H(+). Its pathway is steroid biosynthesis; zymosterol biosynthesis; zymosterol from lanosterol: step 2/6. Its function is as follows. Reduces the C14=C15 double bond of 4,4-dimethyl-cholesta-8,14,24-trienol to produce 4,4-dimethyl-cholesta-8,24-dienol. This Septoria lycopersici (Tomato leaf spot fungus) protein is Delta(14)-sterol reductase (ERG3).